The chain runs to 506 residues: Aluminum-activated malate transporter 7 (506 aa).

The next 6 helical transmembrane spans lie at 28–48 (VGLV…YDSF), 52–72 (AMWA…ATLG), 78–98 (VAAT…ASMS), 104–124 (PILL…VRFF), 130–150 (RYDY…VSGF), and 166–186 (VIIG…VWAG). The interval 461-485 (DDGNNDDTSKNDNGSKEVSIHEKHE) is disordered. Over residues 467 to 485 (DTSKNDNGSKEVSIHEKHE) the composition is skewed to basic and acidic residues.

It belongs to the aromatic acid exporter (TC 2.A.85) family.

It is found in the membrane. Functionally, malate transporter. This Arabidopsis thaliana (Mouse-ear cress) protein is Aluminum-activated malate transporter 7 (ALMT7).